A 141-amino-acid polypeptide reads, in one-letter code: Putative pre-16S rRNA nuclease (141 aa).

The protein belongs to the YqgF nuclease family.

Its subcellular location is the cytoplasm. Its function is as follows. Could be a nuclease involved in processing of the 5'-end of pre-16S rRNA. The protein is Putative pre-16S rRNA nuclease of Shewanella denitrificans (strain OS217 / ATCC BAA-1090 / DSM 15013).